A 502-amino-acid chain; its full sequence is Protein nucleotidyltransferase YdiU (502 aa).

Positions 98, 100, 101, 121, 133, 134, 184, and 191 each coordinate ATP. The active-site Proton acceptor is the Asp260. Residues Asn261 and Asp270 each coordinate Mg(2+). Residue Asp270 participates in ATP binding.

Belongs to the SELO family. Mg(2+) is required as a cofactor. The cofactor is Mn(2+).

It catalyses the reaction L-seryl-[protein] + ATP = 3-O-(5'-adenylyl)-L-seryl-[protein] + diphosphate. The enzyme catalyses L-threonyl-[protein] + ATP = 3-O-(5'-adenylyl)-L-threonyl-[protein] + diphosphate. It carries out the reaction L-tyrosyl-[protein] + ATP = O-(5'-adenylyl)-L-tyrosyl-[protein] + diphosphate. The catalysed reaction is L-histidyl-[protein] + UTP = N(tele)-(5'-uridylyl)-L-histidyl-[protein] + diphosphate. It catalyses the reaction L-seryl-[protein] + UTP = O-(5'-uridylyl)-L-seryl-[protein] + diphosphate. The enzyme catalyses L-tyrosyl-[protein] + UTP = O-(5'-uridylyl)-L-tyrosyl-[protein] + diphosphate. In terms of biological role, nucleotidyltransferase involved in the post-translational modification of proteins. It can catalyze the addition of adenosine monophosphate (AMP) or uridine monophosphate (UMP) to a protein, resulting in modifications known as AMPylation and UMPylation. This chain is Protein nucleotidyltransferase YdiU, found in Rhizobium rhizogenes (strain K84 / ATCC BAA-868) (Agrobacterium radiobacter).